A 316-amino-acid chain; its full sequence is Fe-S cluster assembly protein DRE2 (316 aa).

The N-terminal SAM-like domain stretch occupies residues 4-156 (SMPVATTVAA…KPQHVASTSV (153 aa)). The segment at 157-202 (PLKSRQPGALLNRKKTDPAKKQALWALSSPSTPKIDPEALLTAEDK) is linker. Cys209, Cys223, Cys226, and Cys228 together coordinate [2Fe-2S] cluster. The fe-S binding site A stretch occupies residues 209–228 (CEPVRSSAPRRKKACKSCSC). Cys279, Cys282, Cys290, and Cys293 together coordinate [4Fe-4S] cluster. 2 consecutive short sequence motifs (cx2C motif) follow at residues 279 to 282 (CGSC) and 290 to 293 (CAGC). A fe-S binding site B region spans residues 279–293 (CGSCFLGDAFRCAGC).

This sequence belongs to the anamorsin family. In terms of assembly, monomer. Interacts with TAH18. Interacts with MIA40. It depends on [2Fe-2S] cluster as a cofactor. The cofactor is [4Fe-4S] cluster.

Its subcellular location is the cytoplasm. The protein resides in the mitochondrion intermembrane space. Its function is as follows. Component of the cytosolic iron-sulfur (Fe-S) protein assembly (CIA) machinery required for the maturation of extramitochondrial Fe-S proteins. Part of an electron transfer chain functioning in an early step of cytosolic Fe-S biogenesis, facilitating the de novo assembly of a [4Fe-4S] cluster on the scaffold complex CFD1-NBP35. Electrons are transferred to DRE2 from NADPH via the FAD- and FMN-containing protein TAH18. TAH18-DRE2 are also required for the assembly of the diferric tyrosyl radical cofactor of ribonucleotide reductase (RNR), probably by providing electrons for reduction during radical cofactor maturation in the catalytic small subunit RNR2. The polypeptide is Fe-S cluster assembly protein DRE2 (Laccaria bicolor (strain S238N-H82 / ATCC MYA-4686) (Bicoloured deceiver)).